An 84-amino-acid polypeptide reads, in one-letter code: Large ribosomal subunit protein bL31B (84 aa).

This sequence belongs to the bacterial ribosomal protein bL31 family. Type B subfamily. In terms of assembly, part of the 50S ribosomal subunit.

The protein is Large ribosomal subunit protein bL31B of Phocaeicola vulgatus (strain ATCC 8482 / DSM 1447 / JCM 5826 / CCUG 4940 / NBRC 14291 / NCTC 11154) (Bacteroides vulgatus).